Reading from the N-terminus, the 213-residue chain is Ras-related protein Rab-25 (213 aa).

Residues Ser21, Gly24, Lys25, Thr26, Asn27, Ser38, His39, Thr43, and Thr44 each contribute to the GTP site. Thr26 serves as a coordination point for Mg(2+). 2 consecutive short sequence motifs (switch) follow at residues 35–49 and 67–84; these read NEFS…GVEF and DTAG…YYRG. Positions 44 and 67 each coordinate Mg(2+). Positions 70, 125, 126, 128, 156, and 157 each coordinate GTP. S-geranylgeranyl cysteine attachment occurs at residues Cys209 and Cys210. Cys210 carries the cysteine methyl ester modification. Residues 211 to 213 constitute a propeptide, removed in mature form; sequence INL.

It belongs to the small GTPase superfamily. Rab family. Interacts (GTP-bound form) with RAB11FIP1, RAB11FIP2, RAB11FIP3 and RAB11FIP4. Interacts (via the hypervariable C-terminal region) with ITGB1 (via the cytoplasmic region); the interaction is GTP-dependent. Interacts with ITGAV. Associates with the integrin alpha-V/beta-1 heterodimer. Interacts with VPS33B. The cofactor is Mg(2+). In terms of tissue distribution, expression is restricted to epithelial cells. Expressed in the gastrointestinal mucosa, (highest expression seen in the ileum and colon), kidney, and lung. A very minor and variable level of expression is seen in the splenic tissue.

Its subcellular location is the cell membrane. It is found in the cell projection. It localises to the pseudopodium membrane. The protein resides in the cytoplasmic vesicle. It catalyses the reaction GTP + H2O = GDP + phosphate + H(+). Regulated by guanine nucleotide exchange factors (GEFs) which promote the exchange of bound GDP for free GTP. Regulated by GTPase activating proteins (GAPs) which increase the GTP hydrolysis activity. Inhibited by GDP dissociation inhibitors (GDIs) which prevent Rab-GDP dissociation. The small GTPases Rab are key regulators of intracellular membrane trafficking, from the formation of transport vesicles to their fusion with membranes. Rabs cycle between an inactive GDP-bound form and an active GTP-bound form that is able to recruit to membranes different set of downstream effectors directly responsible for vesicle formation, movement, tethering and fusion. RAB25 regulates epithelial cell differentiation, proliferation and survival, thereby playing key roles in tumorigenesis. Promotes invasive migration of cells in which it functions to localize and maintain integrin alpha-V/beta-1 at the tips of extending pseudopodia. Involved in the regulation of epithelial morphogenesis through the control of CLDN4 expression and localization at tight junctions. May selectively regulate the apical recycling pathway. Together with MYO5B regulates transcytosis. In Oryctolagus cuniculus (Rabbit), this protein is Ras-related protein Rab-25 (RAB25).